The chain runs to 327 residues: Type II methyltransferase M.HhaI (327 aa).

The 314-residue stretch at 12-325 folds into the SAM-dependent MTase C5-type domain; that stretch reads LRFIDLFAGL…YNIGSSLNFK (314 aa). Cys81 is an active-site residue.

It belongs to the class I-like SAM-binding methyltransferase superfamily. C5-methyltransferase family. In terms of assembly, monomer.

The catalysed reaction is a 2'-deoxycytidine in DNA + S-adenosyl-L-methionine = a 5-methyl-2'-deoxycytidine in DNA + S-adenosyl-L-homocysteine + H(+). Its function is as follows. A methylase, recognizes the double-stranded sequence 5'-GCGC-3', methylates C-2 on both strands, and protects the DNA from cleavage by the HhaI endonuclease. In Haemophilus parahaemolyticus, this protein is Type II methyltransferase M.HhaI (hhaIM).